The sequence spans 534 residues: Polyprotein pp62 (534 aa).

It belongs to the asfivirus polyprotein pp62 family. Monomer. Predominantly exists as a monomer, with very little dimers. Homodimerization seems to be linked to low pH. In terms of assembly, homodimer; disulfide-linked. Homotrimer; disulfide-linked. Homohexamer. Post-translationally, monoubiquitinated in vitro by viral UBCv1. Specific enzymatic cleavages in vivo by the viral pS273R protease yield mature proteins.

The protein resides in the host cytoplasm. Its subcellular location is the host perinuclear region. The protein localises to the virion. Essential for the correct assembly and maturation of the core of the virion. In terms of biological role, component of the core shell. Binds to phosphatidylserine, which may enable the core shell binding with the inner membrane. Functionally, component of the core shell. Binds to phosphatidylserine and DNA, which may link the core shell to the inner membrane and to the viral nucleoid. Its function is as follows. Component of the core shell. The sequence is that of Polyprotein pp62 from Ornithodoros (relapsing fever ticks).